Consider the following 249-residue polypeptide: Probable septum site-determining protein MinC (249 aa).

Residues 116–149 form a disordered region; sequence AAVSPPPPPPPPPARAEPAAPVARPAPGRMQRNA. The segment covering 119–130 has biased composition (pro residues); sequence SPPPPPPPPPAR. The segment covering 131-142 has biased composition (low complexity); it reads AEPAAPVARPAP.

The protein belongs to the MinC family. In terms of assembly, interacts with MinD and FtsZ.

Cell division inhibitor that blocks the formation of polar Z ring septums. Rapidly oscillates between the poles of the cell to destabilize FtsZ filaments that have formed before they mature into polar Z rings. Prevents FtsZ polymerization. This chain is Probable septum site-determining protein MinC, found in Xanthomonas campestris pv. campestris (strain ATCC 33913 / DSM 3586 / NCPPB 528 / LMG 568 / P 25).